The sequence spans 256 residues: Pimeloyl-[acyl-carrier protein] methyl ester esterase (256 aa).

The 228-residue stretch at histidine 15–proline 242 folds into the AB hydrolase-1 domain. Substrate contacts are provided by residues tryptophan 22, serine 82 to leucine 83, and phenylalanine 143 to glutamine 147. The Nucleophile role is filled by serine 82. Active-site residues include aspartate 207 and histidine 235. Residue histidine 235 participates in substrate binding.

The protein belongs to the AB hydrolase superfamily. Carboxylesterase BioH family. Monomer.

Its subcellular location is the cytoplasm. It catalyses the reaction 6-carboxyhexanoyl-[ACP] methyl ester + H2O = 6-carboxyhexanoyl-[ACP] + methanol + H(+). Its pathway is cofactor biosynthesis; biotin biosynthesis. In terms of biological role, the physiological role of BioH is to remove the methyl group introduced by BioC when the pimeloyl moiety is complete. It allows to synthesize pimeloyl-ACP via the fatty acid synthetic pathway through the hydrolysis of the ester bonds of pimeloyl-ACP esters. This is Pimeloyl-[acyl-carrier protein] methyl ester esterase from Escherichia coli O6:K15:H31 (strain 536 / UPEC).